The primary structure comprises 168 residues: Shikimate kinase (168 aa).

10 to 15 serves as a coordination point for ATP; it reads CSGKST. Position 14 (Ser-14) interacts with Mg(2+). 3 residues coordinate substrate: Asp-32, Arg-56, and Gly-78. Arg-116 lines the ATP pocket. Arg-133 is a substrate binding site.

It belongs to the shikimate kinase family. Monomer. The cofactor is Mg(2+).

The protein resides in the cytoplasm. It catalyses the reaction shikimate + ATP = 3-phosphoshikimate + ADP + H(+). It functions in the pathway metabolic intermediate biosynthesis; chorismate biosynthesis; chorismate from D-erythrose 4-phosphate and phosphoenolpyruvate: step 5/7. In terms of biological role, catalyzes the specific phosphorylation of the 3-hydroxyl group of shikimic acid using ATP as a cosubstrate. The sequence is that of Shikimate kinase from Aquifex aeolicus (strain VF5).